We begin with the raw amino-acid sequence, 177 residues long: Large ribosomal subunit protein uL6 (177 aa).

Belongs to the universal ribosomal protein uL6 family. Part of the 50S ribosomal subunit.

Functionally, this protein binds to the 23S rRNA, and is important in its secondary structure. It is located near the subunit interface in the base of the L7/L12 stalk, and near the tRNA binding site of the peptidyltransferase center. The polypeptide is Large ribosomal subunit protein uL6 (Methylibium petroleiphilum (strain ATCC BAA-1232 / LMG 22953 / PM1)).